Reading from the N-terminus, the 171-residue chain is Protein ups1 homolog (171 aa).

The tract at residues 1 to 79 (MTAICTDKTE…LNVNKSYILE (79 aa)) is required for mitochondrial targeting. The PRELI/MSF1 domain occupies 2–171 (TAICTDKTEL…YVIQQKFQPS (170 aa)).

It localises to the mitochondrion inner membrane. The protein localises to the mitochondrion intermembrane space. Required for maintenance of normal mitochondrial morphology as well as PCP1-dependent processing of MGM1. The chain is Protein ups1 homolog from Schizosaccharomyces pombe (strain 972 / ATCC 24843) (Fission yeast).